We begin with the raw amino-acid sequence, 111 residues long: Probable 4-amino-4-deoxy-L-arabinose-phosphoundecaprenol flippase subunit ArnE (111 aa).

3 helical membrane-spanning segments follow: residues 39–59 (WLAISLLLLGGAMLVWLWVLQ), 61–81 (VPVGIAYPMFSLNFVLVTLAA), and 89–109 (VSLRHGCGLLLIVAGVMCMGV). One can recognise an EamA domain in the interval 40–109 (LAISLLLLGG…IVAGVMCMGV (70 aa)).

This sequence belongs to the ArnE family. As to quaternary structure, heterodimer of ArnE and ArnF.

It localises to the cell inner membrane. It participates in bacterial outer membrane biogenesis; lipopolysaccharide biosynthesis. Translocates 4-amino-4-deoxy-L-arabinose-phosphoundecaprenol (alpha-L-Ara4N-phosphoundecaprenol) from the cytoplasmic to the periplasmic side of the inner membrane. The sequence is that of Probable 4-amino-4-deoxy-L-arabinose-phosphoundecaprenol flippase subunit ArnE from Sodalis glossinidius (strain morsitans).